The following is a 58-amino-acid chain: Small ribosomal subunit protein bS21 (58 aa).

This sequence belongs to the bacterial ribosomal protein bS21 family.

The chain is Small ribosomal subunit protein bS21 from Prochlorococcus marinus (strain MIT 9515).